Here is a 586-residue protein sequence, read N- to C-terminus: Phosphomethylpyrimidine synthase (586 aa).

Positions 1-59 (MKQSVSAEQIELKSSLPGSKKVYVDGPREGMKVPMREIEQSDTNGVPNPPIRVYDTSGP) are disordered. Basic and acidic residues predominate over residues 22–39 (VYVDGPREGMKVPMREIE). Residues asparagine 193, methionine 222, tyrosine 251, histidine 287, 307–309 (SRG), 348–351 (DGLR), and glutamate 387 each bind substrate. A Zn(2+)-binding site is contributed by histidine 391. Substrate is bound at residue tyrosine 414. A Zn(2+)-binding site is contributed by histidine 455. Residues cysteine 535, cysteine 538, and cysteine 543 each coordinate [4Fe-4S] cluster.

This sequence belongs to the ThiC family. It depends on [4Fe-4S] cluster as a cofactor.

The catalysed reaction is 5-amino-1-(5-phospho-beta-D-ribosyl)imidazole + S-adenosyl-L-methionine = 4-amino-2-methyl-5-(phosphooxymethyl)pyrimidine + CO + 5'-deoxyadenosine + formate + L-methionine + 3 H(+). Its pathway is cofactor biosynthesis; thiamine diphosphate biosynthesis. In terms of biological role, catalyzes the synthesis of the hydroxymethylpyrimidine phosphate (HMP-P) moiety of thiamine from aminoimidazole ribotide (AIR) in a radical S-adenosyl-L-methionine (SAM)-dependent reaction. In Bacillus cereus (strain ZK / E33L), this protein is Phosphomethylpyrimidine synthase.